A 241-amino-acid chain; its full sequence is MLSESLTKTKLTDPLILDLLQNIRKHRSMLEDLKSIKIDPNLTNIISNEIGRELYIENEFHKAKGFRKLHIEVAEFSKNLRILHCVFFPDPKFDIPIFGMDLVKINDIVSAAIVDLSPASQNQALKYEKLLSGVDKSSFTSLREIPKWGRIFSNNVFFASLRNKSEKNDFCSVVDQYLSILIKLSKKAKPEFNEEIIQERIDFQKNYCAQQMKNEKTSMVLLKYFDEKWVNNYIKTVLFDF.

This sequence belongs to the HY2 family.

The catalysed reaction is (2R,3Z)-phycocyanobilin + 4 oxidized [2Fe-2S]-[ferredoxin] = biliverdin IXalpha + 4 reduced [2Fe-2S]-[ferredoxin] + 4 H(+). Catalyzes the four-electron reduction of biliverdin IX-alpha (2-electron reduction at both the A and D rings); the reaction proceeds via an isolatable 2-electron intermediate, 181,182-dihydrobiliverdin. In Prochlorococcus marinus (strain MIT 9301), this protein is Phycocyanobilin:ferredoxin oxidoreductase.